Here is a 769-residue protein sequence, read N- to C-terminus: Serine protease HtrA-like (769 aa).

The segment covering methionine 1–glutamate 20 has biased composition (basic residues). Residues methionine 1 to alanine 390 form a disordered region. Composition is skewed to basic and acidic residues over residues phenylalanine 21–lysine 64 and leucine 71–lysine 108. The span at tyrosine 126 to lysine 137 shows a compositional bias: polar residues. Over residues serine 138–serine 186 the composition is skewed to basic and acidic residues. Polar residues-rich tracts occupy residues glycine 202 to proline 221 and glutamine 247 to serine 262. Residues glutamine 264–valine 295 are compositionally biased toward basic and acidic residues. A compositionally biased stretch (polar residues) spans asparagine 298 to leucine 308. The span at lysine 310–asparagine 330 shows a compositional bias: basic and acidic residues. Residues alanine 331–histidine 347 are compositionally biased toward polar residues. Over residues arginine 348 to lysine 362 the composition is skewed to basic and acidic residues. Residues glutamine 366–alanine 390 are compositionally biased toward polar residues. Residues leucine 410–valine 430 form a helical membrane-spanning segment. Catalysis depends on charge relay system residues histidine 504, aspartate 534, and serine 619. One can recognise a PDZ domain in the interval isoleucine 680–aspartate 733.

It belongs to the peptidase S1C family.

It localises to the cell membrane. In Staphylococcus aureus (strain bovine RF122 / ET3-1), this protein is Serine protease HtrA-like.